We begin with the raw amino-acid sequence, 272 residues long: MSGFEQLFAGKLPKLIMFDLDGTLVDSVPDLAVAVDTMLAELGRPIAGLESVRAWVGNGAPVLVRRALANNLDHSGVDDALAEQGLEIFMRAYAQKHEFTVVYPGVRETLKWLQKMGVEMALITNKPERFVAPLLDEMKLGRFFRWIVGGDTMPQKKPDPAALFFVMKMAGAPASQSLFVGDSRSDVQAAKAAGVACVALSYGYNHGRPIAEENPAMVIDDLRKLIPGCLDMDAEILLPDIKRPSSRESIVVVTRKLWMKVIKALARWRWRA.

Residue D19 is the Nucleophile of the active site. D19, D21, and D182 together coordinate Mg(2+).

The protein belongs to the HAD-like hydrolase superfamily. CbbY/CbbZ/Gph/YieH family. Mg(2+) serves as cofactor.

The enzyme catalyses 2-phosphoglycolate + H2O = glycolate + phosphate. It functions in the pathway organic acid metabolism; glycolate biosynthesis; glycolate from 2-phosphoglycolate: step 1/1. Specifically catalyzes the dephosphorylation of 2-phosphoglycolate. Is involved in the dissimilation of the intracellular 2-phosphoglycolate formed during the DNA repair of 3'-phosphoglycolate ends, a major class of DNA lesions induced by oxidative stress. The sequence is that of Phosphoglycolate phosphatase from Pseudomonas syringae pv. syringae (strain B728a).